Reading from the N-terminus, the 172-residue chain is Scytalone dehydratase-like protein Arp1 (172 aa).

Tyrosine 49 provides a ligand contact to substrate. Residues histidine 84 and histidine 109 contribute to the active site. Asparagine 130 contacts substrate.

The protein belongs to the scytalone dehydratase family. As to quaternary structure, homotrimer. Each subunit contains an active site, located in the central part of the hydrophobic core of the monomer, which functions independently.

In terms of biological role, scytalone dehydratase-like protein; part of the Pks2 gene cluster that mediates the formation of infectious structures (appressoria), enabling these fungi to kill insects faster. The product of the Pks2 gene cluster is different from the one of Pks1 and has still not been identified. This is Scytalone dehydratase-like protein Arp1 from Metarhizium robertsii (strain ARSEF 23 / ATCC MYA-3075) (Metarhizium anisopliae (strain ARSEF 23)).